Reading from the N-terminus, the 416-residue chain is 4-hydroxy-3-methylbut-2-en-1-yl diphosphate synthase (flavodoxin) (416 aa).

4 residues coordinate [4Fe-4S] cluster: C304, C307, C350, and E357.

The protein belongs to the IspG family. [4Fe-4S] cluster is required as a cofactor.

It carries out the reaction (2E)-4-hydroxy-3-methylbut-2-enyl diphosphate + oxidized [flavodoxin] + H2O + 2 H(+) = 2-C-methyl-D-erythritol 2,4-cyclic diphosphate + reduced [flavodoxin]. It participates in isoprenoid biosynthesis; isopentenyl diphosphate biosynthesis via DXP pathway; isopentenyl diphosphate from 1-deoxy-D-xylulose 5-phosphate: step 5/6. Its function is as follows. Converts 2C-methyl-D-erythritol 2,4-cyclodiphosphate (ME-2,4cPP) into 1-hydroxy-2-methyl-2-(E)-butenyl 4-diphosphate. This chain is 4-hydroxy-3-methylbut-2-en-1-yl diphosphate synthase (flavodoxin), found in Burkholderia pseudomallei (strain K96243).